We begin with the raw amino-acid sequence, 340 residues long: Peroxisomal adenine nucleotide transporter 1 (340 aa).

3 Solcar repeats span residues 4–119, 133–218, and 236–320; these read ENAV…VRKH, FSTP…LREA, and LSPG…LTKM. 6 helical membrane passes run 6-26, 96-116, 139-159, 190-210, 242-262, and 293-313; these read AVIG…LDLA, GSST…YTLV, LVLG…INVV, GFWA…ITYA, FVMG…LIIA, and WKGL…LFMF.

It belongs to the mitochondrial carrier (TC 2.A.29) family.

The protein resides in the peroxisome membrane. Adenine nucleotide transporter involved in the uniport of ATP and adenine nucleotide hetero-exchange transport between the cytosol and the peroxisomal lumen. This transport is accompanied by a proton transport from the peroxisomal lumen to the cytosol. Transport of ATP into the peroxisome is required for beta-oxidation of medium-chain fatty acids. The polypeptide is Peroxisomal adenine nucleotide transporter 1 (ANT1) (Eremothecium gossypii (strain ATCC 10895 / CBS 109.51 / FGSC 9923 / NRRL Y-1056) (Yeast)).